A 437-amino-acid chain; its full sequence is MQTTQEIQTSQNPLERRIDMSLAVADIDKAVEARLKQMARSVKMPGFRPGKVPLKIVEQTYGPQARSEAIGAAVERAFGEKVREQNLRVAGYPRIEPKEAGSEGALEFSAVFEVYPEVVVGDLSAQSIEQPTLVVGDAEVDKTIDVLRKQRTTFEAAARPTQDGDRVTIDFAGRKDGELFEGGQATDFPFVIGAGSMLKDFETAVVGLGVGETKTFDMTFPEDYHAKHLAGQPVQFEVTLKSVEAPKLPEVDSDFAKALGVADGNVDKLREEVKGNLEREVKRRIQAKVKEQAMDALLAVTPIEVPKALVESEATQLAENAKRDLAARGMNTKDIPVQPAWFGDQAMRRVKLGLIMAEVVKGNELHAKPEQIRGLVEEMAQSYEDPSELVRWYYAQPDRLAQAEAVVIEDNVVAWVLSKAQTSEKSIAFDDLMGNAA.

The PPIase FKBP-type domain maps to 164–249; the sequence is GDRVTIDFAG…LKSVEAPKLP (86 aa).

It belongs to the FKBP-type PPIase family. Tig subfamily.

Its subcellular location is the cytoplasm. It catalyses the reaction [protein]-peptidylproline (omega=180) = [protein]-peptidylproline (omega=0). Functionally, involved in protein export. Acts as a chaperone by maintaining the newly synthesized protein in an open conformation. Functions as a peptidyl-prolyl cis-trans isomerase. This Azoarcus sp. (strain BH72) protein is Trigger factor.